Reading from the N-terminus, the 329-residue chain is Probable cell division protein WhiA (329 aa).

A DNA-binding region (H-T-H motif) is located at residues Ser-276 to Arg-309. Positions Ala-308–Gly-329 are disordered. Over residues Arg-309–Glu-318 the composition is skewed to polar residues.

It belongs to the WhiA family.

Functionally, involved in cell division and chromosome segregation. In Cutibacterium acnes (strain DSM 16379 / KPA171202) (Propionibacterium acnes), this protein is Probable cell division protein WhiA.